We begin with the raw amino-acid sequence, 617 residues long: Vacuolar protein sorting-associated protein 33B (617 aa).

Residue Ala2 is modified to N-acetylalanine.

This sequence belongs to the STXBP/unc-18/SEC1 family. As to quaternary structure, interacts with RAB11A and VIPAS39. Associates with adapter protein complex 3 (AP-3), clathrin:AP-3 and clathrin:HGS complexes. Phosphorylated on tyrosine residues.

The protein localises to the late endosome membrane. It localises to the lysosome membrane. Its subcellular location is the early endosome. It is found in the cytoplasmic vesicle. The protein resides in the clathrin-coated vesicle. The protein localises to the recycling endosome. In terms of biological role, may play a role in vesicle-mediated protein trafficking to lysosomal compartments and in membrane docking/fusion reactions of late endosomes/lysosomes. Required for proper trafficking and targeting of the collagen-modifying enzyme lysyl hydroxylase 3 (LH3) to intracellular collagen. Mediates phagolysosomal fusion in macrophages. Proposed to be involved in endosomal maturation implicating in part VIPAS39. In epithelial cells, the VPS33B:VIPAS39 complex may play a role in the apical RAB11A-dependentrecycling pathway and in the maintenance of the apical-basolateral polarity. Seems to be involved in the sorting of specific cargos from the trans-Golgi network to alpha-granule-destined multivesicular bodies (MVBs) promoting MVBs maturation in megakaryocytes. This is Vacuolar protein sorting-associated protein 33B (Vps33b) from Mus musculus (Mouse).